We begin with the raw amino-acid sequence, 374 residues long: Ribosomal RNA large subunit methyltransferase G (374 aa).

This sequence belongs to the methyltransferase superfamily. RlmG family.

It localises to the cytoplasm. It carries out the reaction guanosine(1835) in 23S rRNA + S-adenosyl-L-methionine = N(2)-methylguanosine(1835) in 23S rRNA + S-adenosyl-L-homocysteine + H(+). Specifically methylates the guanine in position 1835 (m2G1835) of 23S rRNA. In Ectopseudomonas mendocina (strain ymp) (Pseudomonas mendocina), this protein is Ribosomal RNA large subunit methyltransferase G.